A 325-amino-acid polypeptide reads, in one-letter code: Electron transfer flavoprotein subunit alpha (325 aa).

An FAD-binding site is contributed by Leu-262–Asp-290.

The protein belongs to the ETF alpha-subunit/FixB family. As to quaternary structure, heterodimer of an alpha and a beta subunit. FAD serves as cofactor.

The electron transfer flavoprotein serves as a specific electron acceptor for other dehydrogenases. It transfers the electrons to the main respiratory chain via ETF-ubiquinone oxidoreductase (ETF dehydrogenase). The chain is Electron transfer flavoprotein subunit alpha (etfA) from Bacillus subtilis (strain 168).